The sequence spans 251 residues: PF03932 family protein CutC (251 aa).

This sequence belongs to the CutC family.

The protein localises to the cytoplasm. The polypeptide is PF03932 family protein CutC (Agrobacterium fabrum (strain C58 / ATCC 33970) (Agrobacterium tumefaciens (strain C58))).